The chain runs to 426 residues: Serine--tRNA ligase (426 aa).

229 to 231 (TAE) provides a ligand contact to L-serine. ATP is bound by residues 260-262 (RTE) and Val276. L-serine is bound at residue Glu283. 350–353 (EVTS) serves as a coordination point for ATP. Position 386 (Thr386) interacts with L-serine.

It belongs to the class-II aminoacyl-tRNA synthetase family. Type-1 seryl-tRNA synthetase subfamily. Homodimer. The tRNA molecule binds across the dimer.

The protein resides in the cytoplasm. It carries out the reaction tRNA(Ser) + L-serine + ATP = L-seryl-tRNA(Ser) + AMP + diphosphate + H(+). The catalysed reaction is tRNA(Sec) + L-serine + ATP = L-seryl-tRNA(Sec) + AMP + diphosphate + H(+). Its pathway is aminoacyl-tRNA biosynthesis; selenocysteinyl-tRNA(Sec) biosynthesis; L-seryl-tRNA(Sec) from L-serine and tRNA(Sec): step 1/1. Catalyzes the attachment of serine to tRNA(Ser). Is also able to aminoacylate tRNA(Sec) with serine, to form the misacylated tRNA L-seryl-tRNA(Sec), which will be further converted into selenocysteinyl-tRNA(Sec). This Rhodopirellula baltica (strain DSM 10527 / NCIMB 13988 / SH1) protein is Serine--tRNA ligase.